A 273-amino-acid polypeptide reads, in one-letter code: tRNA pseudouridine synthase B (273 aa).

The active-site Nucleophile is the D38.

This sequence belongs to the pseudouridine synthase TruB family. Type 1 subfamily.

It catalyses the reaction uridine(55) in tRNA = pseudouridine(55) in tRNA. Functionally, responsible for synthesis of pseudouridine from uracil-55 in the psi GC loop of transfer RNAs. This is tRNA pseudouridine synthase B from Campylobacter curvus (strain 525.92).